We begin with the raw amino-acid sequence, 183 residues long: Capsid protein (183 aa).

The segment at 136–183 (NAPILSTLPETTVVRRRGRSPRRRTPSPRRRRSQSPRRRRSQSRESQC) is disordered. A compositionally biased stretch (basic residues) spans 149–176 (VRRRGRSPRRRTPSPRRRRSQSPRRRRS). Ser155, Ser162, and Ser170 each carry phosphoserine; by host. The stretch at 155-161 (SPRRRTP) is one 1; half-length repeat. The tract at residues 155–177 (SPRRRTPSPRRRRSQSPRRRRSQ) is 3 X 8 AA repeats of S-P-R-R-R-[PR]-S-Q. The Bipartite nuclear localization signal signature appears at 158-175 (RRTPSPRRRRSQSPRRRR). Tandem repeats lie at residues 162–169 (SPRRRRSQ) and 170–177 (SPRRRRSQ). The RNA binding stretch occupies residues 177-183 (QSRESQC).

Belongs to the orthohepadnavirus core antigen family. In terms of assembly, homodimerizes, then multimerizes. Interacts with cytosol exposed regions of viral L glycoprotein present in the reticulum-to-Golgi compartment. Interacts with human FLNB. Phosphorylated form interacts with host importin alpha; this interaction depends on the exposure of the NLS, which itself depends upon genome maturation and/or phosphorylation of the capsid protein. Interacts with host NUP153. In terms of processing, phosphorylated by host SRPK1, SRPK2, and maybe protein kinase C or GAPDH. Phosphorylation is critical for pregenomic RNA packaging. Protein kinase C phosphorylation is stimulated by HBx protein and may play a role in transport of the viral genome to the nucleus at the late step during the viral replication cycle.

It is found in the virion. Its subcellular location is the host cytoplasm. Self assembles to form an icosahedral capsid. Most capsids appear to be large particles with an icosahedral symmetry of T=4 and consist of 240 copies of capsid protein, though a fraction forms smaller T=3 particles consisting of 180 capsid proteins. Entering capsids are transported along microtubules to the nucleus. Phosphorylation of the capsid is thought to induce exposure of nuclear localization signal in the C-terminal portion of the capsid protein that allows binding to the nuclear pore complex via the importin (karyopherin-) alpha and beta. Capsids are imported in intact form through the nuclear pore into the nuclear basket, where it probably binds NUP153. Only capsids that contain the mature viral genome can release the viral DNA and capsid protein into the nucleoplasm. Immature capsids get stuck in the basket. Capsids encapsulate the pre-genomic RNA and the P protein. Pre-genomic RNA is reverse-transcribed into DNA while the capsid is still in the cytoplasm. The capsid can then either be directed to the nucleus, providing more genomes for transcription, or bud through the endoplasmic reticulum to provide new virions. This Homo sapiens (Human) protein is Capsid protein.